We begin with the raw amino-acid sequence, 245 residues long: 1-(5-phosphoribosyl)-5-[(5-phosphoribosylamino)methylideneamino] imidazole-4-carboxamide isomerase (245 aa).

D8 functions as the Proton acceptor in the catalytic mechanism. The active-site Proton donor is D129.

It belongs to the HisA/HisF family.

The protein resides in the cytoplasm. The catalysed reaction is 1-(5-phospho-beta-D-ribosyl)-5-[(5-phospho-beta-D-ribosylamino)methylideneamino]imidazole-4-carboxamide = 5-[(5-phospho-1-deoxy-D-ribulos-1-ylimino)methylamino]-1-(5-phospho-beta-D-ribosyl)imidazole-4-carboxamide. The protein operates within amino-acid biosynthesis; L-histidine biosynthesis; L-histidine from 5-phospho-alpha-D-ribose 1-diphosphate: step 4/9. The protein is 1-(5-phosphoribosyl)-5-[(5-phosphoribosylamino)methylideneamino] imidazole-4-carboxamide isomerase of Rhodopseudomonas palustris (strain BisB5).